An 891-amino-acid chain; its full sequence is Alanine--tRNA ligase (891 aa).

Residues histidine 564, histidine 568, cysteine 681, and histidine 685 each coordinate Zn(2+).

Belongs to the class-II aminoacyl-tRNA synthetase family. The cofactor is Zn(2+).

It localises to the cytoplasm. The catalysed reaction is tRNA(Ala) + L-alanine + ATP = L-alanyl-tRNA(Ala) + AMP + diphosphate. Functionally, catalyzes the attachment of alanine to tRNA(Ala) in a two-step reaction: alanine is first activated by ATP to form Ala-AMP and then transferred to the acceptor end of tRNA(Ala). Also edits incorrectly charged Ser-tRNA(Ala) and Gly-tRNA(Ala) via its editing domain. The chain is Alanine--tRNA ligase from Methylorubrum populi (strain ATCC BAA-705 / NCIMB 13946 / BJ001) (Methylobacterium populi).